Consider the following 267-residue polypeptide: Large ribosomal subunit protein uL4 (267 aa).

It belongs to the universal ribosomal protein uL4 family. In terms of assembly, part of the 50S ribosomal subunit.

Functionally, one of the primary rRNA binding proteins, this protein initially binds near the 5'-end of the 23S rRNA. It is important during the early stages of 50S assembly. It makes multiple contacts with different domains of the 23S rRNA in the assembled 50S subunit and ribosome. Its function is as follows. Forms part of the polypeptide exit tunnel. This chain is Large ribosomal subunit protein uL4, found in Saccharolobus islandicus (strain L.S.2.15 / Lassen #1) (Sulfolobus islandicus).